Here is a 512-residue protein sequence, read N- to C-terminus: NAD-dependent deacetylase sir2A (512 aa).

The segment at 7 to 110 (IECIHLKDEY…EILENIKSSN (104 aa)) adopts a UBP-type zinc-finger fold. Residues cysteine 9, histidine 11, cysteine 34, cysteine 37, cysteine 46, cysteine 49, cysteine 54, histidine 61, histidine 65, histidine 71, cysteine 84, and cysteine 87 each contribute to the Zn(2+) site. Residues 113-122 (DKIVPKKDQK) show a composition bias toward basic and acidic residues. A disordered region spans residues 113-196 (DKIVPKKDQK…DESSSEGEES (84 aa)). A compositionally biased stretch (low complexity) spans 130–175 (VVPSASITTSSTTTSISKQTTVNNTTTTSSSSTTTTTTTTSTTINN). A compositionally biased stretch (acidic residues) spans 176–195 (NEEEEESESETDESSSEGEE). In terms of domain architecture, Deacetylase sirtuin-type spans 231–503 (CVLKKPTIEE…LDLIKLLGWE (273 aa)). Catalysis depends on histidine 361, which acts as the Proton acceptor. 4 residues coordinate Zn(2+): cysteine 369, cysteine 372, cysteine 393, and cysteine 399.

This sequence belongs to the sirtuin family. The cofactor is Zn(2+).

It carries out the reaction N(6)-acetyl-L-lysyl-[protein] + NAD(+) + H2O = 2''-O-acetyl-ADP-D-ribose + nicotinamide + L-lysyl-[protein]. In terms of biological role, NAD-dependent deacetylase, which plays an important role in the regulation of transcriptional repression. The chain is NAD-dependent deacetylase sir2A (sir2A) from Dictyostelium discoideum (Social amoeba).